Consider the following 587-residue polypeptide: Cryptochrome-1 (587 aa).

Residues 3 to 132 enclose the Photolyase/cryptochrome alpha/beta domain; the sequence is VNAVHWFRKG…EVIVRISHTL (130 aa). Lys-11 is covalently cross-linked (Glycyl lysine isopeptide (Lys-Gly) (interchain with G-Cter in ubiquitin)). The LIR 1 motif lies at 50–54; sequence NRWRF. Phosphoserine; by AMPK is present on Ser-71. The short motif at 82-87 is the LIR 2 element; sequence DVFPRL. Lys-107 is covalently cross-linked (Glycyl lysine isopeptide (Lys-Gly) (interchain with G-Cter in ubiquitin)). Residues 151–156 carry the LIR 3 motif; the sequence is KRFQTL. Residue Lys-159 forms a Glycyl lysine isopeptide (Lys-Gly) (interchain with G-Cter in ubiquitin) linkage. At Ser-247 the chain carries Phosphoserine; by MAPK. Ser-252 contacts FAD. 2 short sequence motifs (LIR) span residues 255–260 and 271–276; these read LRFGCL and DLYKKV. Ser-280 is modified (phosphoserine; by AMPK). Residues 285-290 carry the LIR 6 motif; it reads SLYGQL. Gln-289 serves as a coordination point for FAD. Lys-329 is covalently cross-linked (Glycyl lysine isopeptide (Lys-Gly) (interchain with G-Cter in ubiquitin)). The short motif at 335–339 is the LIR 7 element; it reads TGFPW. His-355 is a binding site for FAD. Positions 371–470 are required for inhibition of CLOCK-BMAL1-mediated transcription; the sequence is WISWEEGMKV…LIGVNYPKPM (100 aa). Residues 379–384 carry the LIR 8 motif; sequence KVFEEL. Residue 387–389 participates in FAD binding; that stretch reads DAD. Short sequence motifs (LIR) lie at residues 395-400, 411-416, and 430-435; these read GSWMWL, HCYCPV, and RRYLPV. Residues 471–493 are interaction with TIMELESS; it reads VNHAEASRLNIERMKQIYQQLSR. Lys-485 is covalently cross-linked (Glycyl lysine isopeptide (Lys-Gly) (interchain with G-Cter in ubiquitin)). Short sequence motifs (LIR) lie at residues 486–491 and 492–497; these read QIYQQL and SRYRGL. The disordered stretch occupies residues 554 to 587; the sequence is GSSSMGHGLSNGKRPSQEEDTQSIGPKVQRQSTN. Ser-569 is subject to Phosphoserine.

Belongs to the DNA photolyase class-1 family. As to quaternary structure, component of the circadian core oscillator, which includes the CRY proteins, CLOCK or NPAS2, BMAL1 or BMAL2, CSNK1D and/or CSNK1E, TIMELESS, and the PER proteins. Interacts directly with TIMELESS. Interacts directly with PER1, PER2 and PER3; interaction with PER2 inhibits its ubiquitination and vice versa. Interacts with FBXL21. Interacts with FBXL3. Interacts with CLOCK-BMAL1 independently of PER2 and DNA. Interacts with HDAC1, HDAC2 and SIN3B. Interacts with nuclear receptors AR, NR1D1, NR3C1/GR, RORA and RORC; the interaction with at least NR3C1/GR is ligand dependent. Interacts with PRKDC. Interacts with the G protein subunit alpha GNAS; the interaction may block GPCR-mediated regulation of cAMP concentrations. Interacts with PRMT5. Interacts with EZH2. Interacts with MYBBP1A, DOCK7, HNRNPU, RPL7A, RPL8 and RPS3. Interacts with PPP5C (via TPR repeats). Interacts with MAP1LC3B. Interacts with CLOCK. Interacts with BMAL1. Interacts weakly with HDAC3; this interaction is enhanced in the presence of FBXL3. Interacts with TRIM28, KCTD5 and DDB1 Interacts with HNF4A. Interacts with PSMD2 in a KDM8-dependent manner. Interacts with KDM8 in a FBXL3-dependent manner. Interacts with PPARG in a ligand-dependent manner. Interacts with PPARD (via domain NR LBD) and NR1I2 (via domain NR LBD) in a ligand-dependent manner. Interacts with PPARA, NR1I3 and VDR. Requires FAD as cofactor. It depends on (6R)-5,10-methylene-5,6,7,8-tetrahydrofolate as a cofactor. Post-translationally, phosphorylation on Ser-247 by MAPK is important for the inhibition of CLOCK-BMAL1-mediated transcriptional activity. Phosphorylation by CSNK1E requires interaction with PER1 or PER2. Phosphorylation at Ser-71 and Ser-280 by AMPK decreases protein stability. Phosphorylation at Ser-569 exhibits a robust circadian rhythm with a peak at CT8, increases protein stability, prevents SCF(FBXL3)-mediated degradation and is antagonized by interaction with PRKDC. In terms of processing, ubiquitinated by the SCF(FBXL3) and SCF(FBXL21) complexes, regulating the balance between degradation and stabilization. The SCF(FBXL3) complex is mainly nuclear and mediates ubiquitination and subsequent degradation of CRY1. In contrast, cytoplasmic SCF(FBXL21) complex-mediated ubiquitination leads to stabilize CRY1 and counteract the activity of the SCF(FBXL3) complex. The SCF(FBXL3) and SCF(FBXL21) complexes probably mediate ubiquitination at different Lys residues. Ubiquitination at Lys-11 and Lys-107 are specifically ubiquitinated by the SCF(FBXL21) complex but not by the SCF(FBXL3) complex. Ubiquitination may be inhibited by PER2. Deubiquitinated by USP7. Undergoes autophagy-mediated degradation in the liver in a time-dependent manner. Autophagic degradation of CRY1 (an inhibitor of gluconeogenesis) occurs during periods of reduced feeding allowing induction of gluconeogenesis and maintenance of blood glucose levels. As to expression, expressed in all tissues tested including spleen, liver, skeletal muscle, kidney, brain, intestine, eye, harderian gland, liver and heart. Highest levels in the eye, brain, kidney and harderian gland. In the brain, especially located to the suprachiasma nucleus (SCN).

The protein resides in the cytoplasm. It localises to the nucleus. In terms of biological role, transcriptional repressor which forms a core component of the circadian clock. The circadian clock, an internal time-keeping system, regulates various physiological processes through the generation of approximately 24 hour circadian rhythms in gene expression, which are translated into rhythms in metabolism and behavior. It is derived from the Latin roots 'circa' (about) and 'diem' (day) and acts as an important regulator of a wide array of physiological functions including metabolism, sleep, body temperature, blood pressure, endocrine, immune, cardiovascular, and renal function. Consists of two major components: the central clock, residing in the suprachiasmatic nucleus (SCN) of the brain, and the peripheral clocks that are present in nearly every tissue and organ system. Both the central and peripheral clocks can be reset by environmental cues, also known as Zeitgebers (German for 'timegivers'). The predominant Zeitgeber for the central clock is light, which is sensed by retina and signals directly to the SCN. The central clock entrains the peripheral clocks through neuronal and hormonal signals, body temperature and feeding-related cues, aligning all clocks with the external light/dark cycle. Circadian rhythms allow an organism to achieve temporal homeostasis with its environment at the molecular level by regulating gene expression to create a peak of protein expression once every 24 hours to control when a particular physiological process is most active with respect to the solar day. Transcription and translation of core clock components (CLOCK, NPAS2, BMAL1, BMAL2, PER1, PER2, PER3, CRY1 and CRY2) plays a critical role in rhythm generation, whereas delays imposed by post-translational modifications (PTMs) are important for determining the period (tau) of the rhythms (tau refers to the period of a rhythm and is the length, in time, of one complete cycle). A diurnal rhythm is synchronized with the day/night cycle, while the ultradian and infradian rhythms have a period shorter and longer than 24 hours, respectively. Disruptions in the circadian rhythms contribute to the pathology of cardiovascular diseases, cancer, metabolic syndromes and aging. A transcription/translation feedback loop (TTFL) forms the core of the molecular circadian clock mechanism. Transcription factors, CLOCK or NPAS2 and BMAL1 or BMAL2, form the positive limb of the feedback loop, act in the form of a heterodimer and activate the transcription of core clock genes and clock-controlled genes (involved in key metabolic processes), harboring E-box elements (5'-CACGTG-3') within their promoters. The core clock genes: PER1/2/3 and CRY1/2 which are transcriptional repressors form the negative limb of the feedback loop and interact with the CLOCK|NPAS2-BMAL1|BMAL2 heterodimer inhibiting its activity and thereby negatively regulating their own expression. This heterodimer also activates nuclear receptors NR1D1/2 and RORA/B/G, which form a second feedback loop and which activate and repress BMAL1 transcription, respectively. CRY1 and CRY2 have redundant functions but also differential and selective contributions at least in defining the pace of the SCN circadian clock and its circadian transcriptional outputs. More potent transcriptional repressor in cerebellum and liver than CRY2, though more effective in lengthening the period of the SCN oscillator. On its side, CRY2 seems to play a critical role in tuning SCN circadian period by opposing the action of CRY1. With CRY2, is dispensable for circadian rhythm generation but necessary for the development of intercellular networks for rhythm synchrony. Capable of translocating circadian clock core proteins such as PER proteins to the nucleus. Interacts with CLOCK-BMAL1 independently of PER proteins and is found at CLOCK-BMAL1-bound sites, suggesting that CRY may act as a molecular gatekeeper to maintain CLOCK-BMAL1 in a poised and repressed state until the proper time for transcriptional activation. Represses the CLOCK-BMAL1 induced transcription of BHLHE40/DEC1, ATF4, MTA1, KLF10 and NAMPT. May repress circadian target genes expression in collaboration with HDAC1 and HDAC2 through histone deacetylation. Mediates the clock-control activation of ATR and modulates ATR-mediated DNA damage checkpoint. In liver, mediates circadian regulation of cAMP signaling and gluconeogenesis by binding to membrane-coupled G proteins and blocking glucagon-mediated increases in intracellular cAMP concentrations and CREB1 phosphorylation. Inhibits hepatic gluconeogenesis by decreasing nuclear FOXO1 levels that down-regulates gluconeogenic gene expression. Besides its role in the maintenance of the circadian clock, is also involved in the regulation of other processes. Represses glucocorticoid receptor NR3C1/GR-induced transcriptional activity by binding to glucocorticoid response elements (GREs). Plays a key role in glucose and lipid metabolism modulation, in part, through the transcriptional regulation of genes involved in these pathways, such as LEP or ACSL4. Represses PPARD and its target genes in the skeletal muscle and limits exercise capacity. Plays an essential role in the generation of circadian rhythms in the retina. Represses the transcriptional activity of NR1I2. This Spalax judaei (Judean Mountains blind mole rat) protein is Cryptochrome-1 (CRY1).